The chain runs to 310 residues: Acetylglutamate kinase (310 aa).

Substrate contacts are provided by residues 79–80 (GG), R101, and N206.

Belongs to the acetylglutamate kinase family. ArgB subfamily.

The protein resides in the cytoplasm. It carries out the reaction N-acetyl-L-glutamate + ATP = N-acetyl-L-glutamyl 5-phosphate + ADP. It functions in the pathway amino-acid biosynthesis; L-arginine biosynthesis; N(2)-acetyl-L-ornithine from L-glutamate: step 2/4. In terms of biological role, catalyzes the ATP-dependent phosphorylation of N-acetyl-L-glutamate. The sequence is that of Acetylglutamate kinase from Rhodospirillum rubrum (strain ATCC 11170 / ATH 1.1.1 / DSM 467 / LMG 4362 / NCIMB 8255 / S1).